Here is a 138-residue protein sequence, read N- to C-terminus: Large ribosomal subunit protein uL16 (138 aa).

This sequence belongs to the universal ribosomal protein uL16 family. As to quaternary structure, part of the 50S ribosomal subunit.

Functionally, binds 23S rRNA and is also seen to make contacts with the A and possibly P site tRNAs. The sequence is that of Large ribosomal subunit protein uL16 from Rhodospirillum rubrum (strain ATCC 11170 / ATH 1.1.1 / DSM 467 / LMG 4362 / NCIMB 8255 / S1).